We begin with the raw amino-acid sequence, 660 residues long: Bifunctional polymyxin resistance protein ArnA (660 aa).

Residues 1 to 304 are formyltransferase ArnAFT; that stretch reads MKAVVFAYHN…EMYLVEGMRF (304 aa). H104 serves as the catalytic Proton donor; for formyltransferase activity. Residues R114 and 136 to 140 contribute to the (6R)-10-formyltetrahydrofolate site; that span reads TVKPD. Residues 316-660 are dehydrogenase ArnADH; the sequence is RRQKVLIMGA…FLKTAVEETK (345 aa). NAD(+) is bound by residues D349 and 370–371; that span reads DI. Residues A395, Y400, and 434-435 each bind UDP-alpha-D-glucuronate; that span reads TS. Residue E436 is the Proton acceptor; for decarboxylase activity of the active site. UDP-alpha-D-glucuronate is bound by residues R462, N494, 528 to 537, and Y615; that span reads KLIDGGEQKR. R621 acts as the Proton donor; for decarboxylase activity in catalysis.

This sequence in the N-terminal section; belongs to the Fmt family. UDP-L-Ara4N formyltransferase subfamily. The protein in the C-terminal section; belongs to the NAD(P)-dependent epimerase/dehydratase family. UDP-glucuronic acid decarboxylase subfamily. In terms of assembly, homohexamer, formed by a dimer of trimers.

It carries out the reaction UDP-alpha-D-glucuronate + NAD(+) = UDP-beta-L-threo-pentopyranos-4-ulose + CO2 + NADH. The catalysed reaction is UDP-4-amino-4-deoxy-beta-L-arabinose + (6R)-10-formyltetrahydrofolate = UDP-4-deoxy-4-formamido-beta-L-arabinose + (6S)-5,6,7,8-tetrahydrofolate + H(+). It functions in the pathway nucleotide-sugar biosynthesis; UDP-4-deoxy-4-formamido-beta-L-arabinose biosynthesis; UDP-4-deoxy-4-formamido-beta-L-arabinose from UDP-alpha-D-glucuronate: step 1/3. It participates in nucleotide-sugar biosynthesis; UDP-4-deoxy-4-formamido-beta-L-arabinose biosynthesis; UDP-4-deoxy-4-formamido-beta-L-arabinose from UDP-alpha-D-glucuronate: step 3/3. Its pathway is bacterial outer membrane biogenesis; lipopolysaccharide biosynthesis. Bifunctional enzyme that catalyzes the oxidative decarboxylation of UDP-glucuronic acid (UDP-GlcUA) to UDP-4-keto-arabinose (UDP-Ara4O) and the addition of a formyl group to UDP-4-amino-4-deoxy-L-arabinose (UDP-L-Ara4N) to form UDP-L-4-formamido-arabinose (UDP-L-Ara4FN). The modified arabinose is attached to lipid A and is required for resistance to polymyxin and cationic antimicrobial peptides. This chain is Bifunctional polymyxin resistance protein ArnA, found in Shewanella sediminis (strain HAW-EB3).